The following is a 150-amino-acid chain: Auxin-binding protein 5 (150 aa).

Residues 1–41 form the signal peptide; that stretch reads MVRRRPATGAAQRPQLAAVGRGLLLASVLAAAASSLPVAES. Residues His-98, His-100, and Glu-104 each coordinate Zn(2+). Asn-136 is a glycosylation site (N-linked (GlcNAc...) asparagine). Position 147 (His-147) interacts with Zn(2+).

Homodimer.

It is found in the endoplasmic reticulum lumen. In terms of biological role, this is probably a receptor for the plant hormone auxin. This Zea mays (Maize) protein is Auxin-binding protein 5 (ABP5).